A 298-amino-acid polypeptide reads, in one-letter code: Beta-1,3-galactosyltransferase 5 (298 aa).

The Cytoplasmic segment spans residues 1–7 (MAFPKMR). The chain crosses the membrane as a helical; Signal-anchor for type II membrane protein span at residues 8–28 (LMYICLLVLGALCLYFSMYSL). Topologically, residues 29 to 298 (NPFKEQSFVY…PRTLLDYWQA (270 aa)) are lumenal. 3 N-linked (GlcNAc...) asparagine glycosylation sites follow: Asn-130, Asn-174, and Asn-231.

Belongs to the glycosyltransferase 31 family.

The protein resides in the golgi apparatus membrane. It catalyses the reaction a globoside Gb4Cer (d18:1(4E)) + UDP-alpha-D-galactose = a globoside GalGb4Cer (d18:1(4E)) + UDP + H(+). It functions in the pathway protein modification; protein glycosylation. Catalyzes the transfer of Gal to GlcNAc-based acceptors with a preference for the core3 O-linked glycan GlcNAc(beta1,3)GalNAc structure. Can use glycolipid LC3Cer as an efficient acceptor. This chain is Beta-1,3-galactosyltransferase 5 (B3GALT5), found in Gorilla gorilla gorilla (Western lowland gorilla).